A 348-amino-acid polypeptide reads, in one-letter code: Phosphate acyltransferase (348 aa).

This sequence belongs to the PlsX family. In terms of assembly, homodimer. Probably interacts with PlsY.

The protein resides in the cytoplasm. It carries out the reaction a fatty acyl-[ACP] + phosphate = an acyl phosphate + holo-[ACP]. The protein operates within lipid metabolism; phospholipid metabolism. Its function is as follows. Catalyzes the reversible formation of acyl-phosphate (acyl-PO(4)) from acyl-[acyl-carrier-protein] (acyl-ACP). This enzyme utilizes acyl-ACP as fatty acyl donor, but not acyl-CoA. This is Phosphate acyltransferase from Francisella tularensis subsp. tularensis (strain FSC 198).